Here is a 220-residue protein sequence, read N- to C-terminus: Protein-methionine-sulfoxide reductase heme-binding subunit MsrQ (220 aa).

A run of 6 helical transmembrane segments spans residues 20–40 (LWLL…LGAT), 51–71 (FEHL…LVTP), 86–106 (ALGL…MVLD), 122–142 (PFIT…LTSN), 153–173 (WSSL…HFLM), and 175–195 (VKSW…LLLW).

The protein belongs to the MsrQ family. Heterodimer of a catalytic subunit (MsrP) and a heme-binding subunit (MsrQ). FMN serves as cofactor. It depends on heme b as a cofactor.

It is found in the cell inner membrane. Part of the MsrPQ system that repairs oxidized periplasmic proteins containing methionine sulfoxide residues (Met-O), using respiratory chain electrons. Thus protects these proteins from oxidative-stress damage caused by reactive species of oxygen and chlorine generated by the host defense mechanisms. MsrPQ is essential for the maintenance of envelope integrity under bleach stress, rescuing a wide series of structurally unrelated periplasmic proteins from methionine oxidation. MsrQ provides electrons for reduction to the reductase catalytic subunit MsrP, using the quinone pool of the respiratory chain. In Brucella melitensis biotype 2 (strain ATCC 23457), this protein is Protein-methionine-sulfoxide reductase heme-binding subunit MsrQ.